A 450-amino-acid chain; its full sequence is FAD-dependent monooxygenase okaB (450 aa).

A helical membrane pass occupies residues 14-34; sequence IVIIIVGLGIAGLSAAIECHG. FAD-binding residues include glutamate 43 and arginine 116. Residue arginine 194 is part of the active site. Residues aspartate 318 and glycine 331 each coordinate FAD.

Belongs to the paxM FAD-dependent monooxygenase family.

It localises to the membrane. It carries out the reaction cyclo(N(8)-(alpha,alpha-dimethylallyl)-L-Trp-6a-(alpha,alpha-dimethylallyl)-L-Trp) + AH2 + O2 = okaramine C + A + H2O. It functions in the pathway alkaloid biosynthesis. Its function is as follows. FAD-dependent monooxygenase; part of the gene cluster that mediates the biosynthesis of okaramine B, a prenylated indole alkaloid that possesses an unusual octacyclic ring system, including a four-membered azetidine ring and an eight-membered azocine ring, and that exhibits insecticidal activity against silkworm larvae. Within the pathway, okaC performs indole 2,3-epoxidation, facilitating the formation of the hexahydropyrrolo[2,3-b]indole (HPI) moiety of okaramine C. okaC then performs asymmetric reverse prenylation of cyclo(L-Trp-L-Trp) at N-1 and C-2' of the indole ring to produce the cyclic prenylated tryptophan dimer cyclo(N8-(alpha,alpha-dimethylallyl)-L-Trp-6a-(alpha,alpha-dime-thylallyl)-L-Trp). The biosynthesis begins with the NRPS okaA that condenses two tryptophan molecules into cyclo(L-Trp-L-Trp). Prenylation by the prenyltransferase okaC then leads to the formation of cyclo(N8-(alpha,alpha-dimethylallyl)-L-Trp-6a-(alpha,alpha-dime-thylallyl)-L-Trp). This is followed by indole 2,3-epoxidation by the FAD-dependent monooxygenase okaB to facilitate the formation of the hexahydropyrrolo[2,3-b]indole (HPI) moiety of okaramine C. The cytochrome P450 monooxygenase okaD then likely catalyzes formation of the eight-membered ring of okaramine A. The dioxygenase okaE further forms the unusual 2-dimethyl-3-methyl-azetidine ring to yield 12-deshydroxyl okaramine E, as well as the hydroxylation of 12-deshydroxyl okaramine E to produce okaramine E. The cytochrome P450 monoxygenase okaG converts 12-deshydroxyl okaramine E into 3-desmethyl okaramine B which is further methylated by the methyltransferase okaF into okaramine B. In a shunt pathway, okaG and okaF together are also able to convert okaramine E into okaramine D. Okaramine H is produced by nonenzymatic conversion from okaramine A. The protein is FAD-dependent monooxygenase okaB of Penicillium ochrochloron.